The primary structure comprises 229 residues: Large ribosomal subunit protein uL1 (229 aa).

The protein belongs to the universal ribosomal protein uL1 family. As to quaternary structure, part of the 50S ribosomal subunit.

Binds directly to 23S rRNA. The L1 stalk is quite mobile in the ribosome, and is involved in E site tRNA release. Its function is as follows. Protein L1 is also a translational repressor protein, it controls the translation of the L11 operon by binding to its mRNA. The polypeptide is Large ribosomal subunit protein uL1 (Mycoplasmopsis pulmonis (strain UAB CTIP) (Mycoplasma pulmonis)).